We begin with the raw amino-acid sequence, 304 residues long: uncharacterized protein (304 aa).

Helical transmembrane passes span 5 to 25, 42 to 62, 68 to 88, 96 to 116, 120 to 140, 150 to 170, 178 to 198, 215 to 235, 245 to 265, and 268 to 288; these read TIILLLFIIVSITWGTTFIAI, FLLASFFLIFLCFYTKTPLLF, IFQLIICIFYFSLPFLLILYG, IASVIFAIMPIIVLFLSFIFF, LYFFQFIGLVLAIIFLSIILF, TIKGVIALLLAMTSHAIIYLY, ISILTFNALPSLLSGLFFLVI, ILATFYLSYFSGVFGILSYFY, ASTIFFIFPIINLMLEEFVWG, and IGIDQLQLIVFLMSSILITIF. EamA domains are found at residues 16–140 and 162–288; these read ITWG…IILF and TSHA…ITIF.

It belongs to the EamA transporter family.

The protein localises to the cell membrane. This is an uncharacterized protein from Buchnera aphidicola subsp. Schlechtendalia chinensis.